Here is a 269-residue protein sequence, read N- to C-terminus: MGSFSPLMTYRYHLYSGTGNSFILGEFIPPLQHIVFLCQKEKVDGFLCVEPSEIADAKLTIFNSDGSEASMCGNGLRCVMAHVAQSLGLEDVSIETVRGVYQGKFFSMDRVLVDMTLLDWKKTKKTLTHVLPGMPEEVFFIDTGVPHVVVFVPDVNKVPVQEWGAFLRYHEDFRPNGVNVDFVQTKKEDTLLVYTYERGCERETLSCGTGMLASALVAADVFSLEQDFSLLVCSRSGNIVKIFSENGKVFLEGPVTLLNCSENIGEFAP.

Substrate is bound by residues asparagine 20 and asparagine 63. Catalysis depends on cysteine 72, which acts as the Proton donor. Residues glycine 73 to asparagine 74, asparagine 179, and glutamate 197 to arginine 198 each bind substrate. Cysteine 207 acts as the Proton acceptor in catalysis. Glycine 208–threonine 209 is a substrate binding site.

It belongs to the diaminopimelate epimerase family. Homodimer.

Its subcellular location is the cytoplasm. The enzyme catalyses (2S,6S)-2,6-diaminopimelate = meso-2,6-diaminopimelate. It functions in the pathway amino-acid biosynthesis; L-lysine biosynthesis via DAP pathway; DL-2,6-diaminopimelate from LL-2,6-diaminopimelate: step 1/1. In terms of biological role, catalyzes the stereoinversion of LL-2,6-diaminopimelate (L,L-DAP) to meso-diaminopimelate (meso-DAP), a precursor of L-lysine and an essential component of the bacterial peptidoglycan. This is Diaminopimelate epimerase from Chlamydia muridarum (strain MoPn / Nigg).